The chain runs to 252 residues: 5'-nucleotidase SurE (252 aa).

Positions 8, 9, 42, and 94 each coordinate a divalent metal cation.

This sequence belongs to the SurE nucleotidase family. A divalent metal cation serves as cofactor.

The protein resides in the cytoplasm. The catalysed reaction is a ribonucleoside 5'-phosphate + H2O = a ribonucleoside + phosphate. In terms of biological role, nucleotidase that shows phosphatase activity on nucleoside 5'-monophosphates. The polypeptide is 5'-nucleotidase SurE (Ehrlichia ruminantium (strain Gardel)).